The sequence spans 375 residues: Delta(12) fatty acid dehydrogenase (375 aa).

Helical transmembrane passes span 54 to 74 (IIAY…PAPL) and 77 to 97 (LAWP…WVIG). A Histidine box-1 motif is present at residues 98 to 102 (HECGH). Residues 110 to 130 (WVDDTVGFILHSFLMTPYFSW) traverse the membrane as a helical segment. Residues 134–138 (HRNHH) carry the Histidine box-2 motif. 3 helical membrane passes run 172–192 (LLIM…TNIS), 218–238 (VLLS…AVAA), and 242–262 (AWVT…FDII). Residues 308–312 (HVMHH) carry the Histidine box-3 motif.

The protein belongs to the fatty acid desaturase type 1 family. The cofactor is Fe cation. Seed.

The protein resides in the membrane. It catalyses the reaction a (9Z,12Z)-octadecadienoyl-containing glycerolipid + 2 Fe(II)-[cytochrome b5] + O2 + 2 H(+) = a (9Z)-octadec-9-en-12-ynoyl-containing glycerolipid + 2 Fe(III)-[cytochrome b5] + 2 H2O. Its pathway is lipid metabolism; polyunsaturated fatty acid biosynthesis. Functionally, changes the delta-12 double bond of linoleic acid into a triple bond in the biosynthesis of crepenynic acid. This is Delta(12) fatty acid dehydrogenase from Crepis alpina (Hawksbeard).